The chain runs to 144 residues: Mercuric transport protein MerC (144 aa).

The Cytoplasmic portion of the chain corresponds to 1-21; that stretch reads MSAITRIIDKIGIVGTIVGSF. A helical membrane pass occupies residues 22–42; it reads SCAMCFPAAASLGAAIGLGFL. Hg(2+) contacts are provided by Cys23 and Cys26. Topologically, residues 43 to 46 are periplasmic; the sequence is SQWE. A helical membrane pass occupies residues 47–67; it reads GLFVQWLIPIFASVALLATLA. Over 68–78 the chain is Cytoplasmic; the sequence is GWFSHRQWQRT. A helical membrane pass occupies residues 79 to 99; it reads LLGSIGPVLALVGVFGLTHHF. The Periplasmic segment spans residues 100–103; the sequence is LDKD. Residues 104–124 traverse the membrane as a helical segment; the sequence is LARVIFYTGLVVMFLVSIWDM. At 125–144 the chain is on the cytoplasmic side; it reads VNPANRRCATDGCETPAPRS.

In terms of assembly, monomer.

It localises to the cell inner membrane. Its activity is regulated as follows. Inhibited by the thiol-modifying reagent N-ethylmaleimide (NEM). Its function is as follows. Involved in mercuric ion uptake. In Acidithiobacillus ferrooxidans (Thiobacillus ferrooxidans), this protein is Mercuric transport protein MerC.